The chain runs to 344 residues: Arginine N-succinyltransferase (344 aa).

Residue Leu-125 participates in succinyl-CoA binding. His-229 functions as the Proton donor in the catalytic mechanism.

This sequence belongs to the arginine N-succinyltransferase family.

The enzyme catalyses succinyl-CoA + L-arginine = N(2)-succinyl-L-arginine + CoA + H(+). It participates in amino-acid degradation; L-arginine degradation via AST pathway; L-glutamate and succinate from L-arginine: step 1/5. Functionally, catalyzes the transfer of succinyl-CoA to arginine to produce N(2)-succinylarginine. The protein is Arginine N-succinyltransferase of Escherichia coli O6:H1 (strain CFT073 / ATCC 700928 / UPEC).